The primary structure comprises 322 residues: Interferon regulatory factor 1 (322 aa).

A DNA-binding region (IRF tryptophan pentad repeat) is located at residues 5–113 (RMRMRPWLEM…SAVRVYRMLP (109 aa)). An N6-acetyllysine modification is found at Lys78. The segment at 92–164 (EEVKDQSRNK…STLPDDHSSY (73 aa)) is disordered. Residues 141-157 (GESSPDTFSDGLSSSTL) show a composition bias toward polar residues. Residues Lys276 and Lys296 each participate in a glycyl lysine isopeptide (Lys-Gly) (interchain with G-Cter in SUMO) cross-link.

It belongs to the IRF family. Monomer. Homodimer. Interacts with EP300. Interacts with MYD88. Interacts with PIAS3. Interacts with SPOP. In terms of processing, phosphorylated by CK2 and this positively regulates its activity. Post-translationally, sumoylation represses the transcriptional activity and displays enhanced resistance to protein degradation. Sumoylated by UBE2I/UBC9 and SUMO1. Inactivates the tumor suppressor activity. Elevated levels in tumor cells. Major site is Lys-276. Sumoylation is enhanced by PIAS3. Desumoylated by SENP1 in tumor cells and appears to compete with ubiquitination on C-terminal sites. Ubiquitinated in a SPOP-depedent manner. Appears to compete with sumoylation on C-terminal sites.

The protein resides in the nucleus. Its subcellular location is the cytoplasm. Its activity is regulated as follows. Activated by MYD88. In terms of biological role, transcriptional regulator which displays a remarkable functional diversity in the regulation of cellular responses. Regulates transcription of IFN and IFN-inducible genes, host response to viral and bacterial infections, regulation of many genes expressed during hematopoiesis, inflammation, immune responses and cell proliferation and differentiation, regulation of the cell cycle and induction of growth arrest and programmed cell death following DNA damage. Stimulates both innate and acquired immune responses through the activation of specific target genes and can act as a transcriptional activator and repressor regulating target genes by binding to an interferon-stimulated response element (ISRE) in their promoters. Has an essentail role in IFNG-dependent immunity to mycobacteria. Binds to a consensus sequence in gene promoters. Its target genes for transcriptional activation activity include: genes involved in anti-viral response, such as IFN-alpha/beta, RIGI, TNFSF10/TRAIL, ZBP1, OAS1/2, PIAS1/GBP, EIF2AK2/PKR and RSAD2/viperin; antibacterial response, such as GBP2, GBP5 and NOS2/INOS; anti-proliferative response, such as p53/TP53, LOX and CDKN1A; apoptosis, such as BBC3/PUMA, CASP1, CASP7 and CASP8; immune response, such as IL7, IL12A/B and IL15, PTGS2/COX2 and CYBB; DNA damage responses and DNA repair, such as POLQ/POLH; MHC class I expression, such as TAP1, PSMB9/LMP2, PSME1/PA28A, PSME2/PA28B and B2M and MHC class II expression, such as CIITA; metabolic enzymes, such as ACOD1/IRG1. Represses genes involved in anti-proliferative response, such as BIRC5/survivin, CCNB1, CCNE1, CDK1, CDK2 and CDK4 and in immune response, such as FOXP3, IL4, ANXA2 and TLR4. Stimulates p53/TP53-dependent transcription through enhanced recruitment of EP300 leading to increased acetylation of p53/TP53. Plays an important role in immune response directly affecting NK maturation and activity, macrophage production of IL12, Th1 development and maturation of CD8+ T-cells. Also implicated in the differentiation and maturation of dendritic cells and in the suppression of regulatory T (Treg) cells development. Acts as a tumor suppressor and plays a role not only in antagonism of tumor cell growth but also in stimulating an immune response against tumor cells. The sequence is that of Interferon regulatory factor 1 (IRF1) from Sus scrofa (Pig).